Reading from the N-terminus, the 550-residue chain is Methyl-coenzyme M reductase subunit alpha (550 aa).

Residue Gln-147 coordinates coenzyme F430. Coenzyme B-binding positions include Arg-225, 256 to 257 (KH), and Arg-270. A Pros-methylhistidine modification is found at His-257. Arg-271 bears the 5-methylarginine mark. Tyr-333 serves as a coordination point for coenzyme M. Position 400 is a 2-methylglutamine (Gln-400). Residue Tyr-444 participates in coenzyme M binding. Gly-445 carries the 1-thioglycine modification. At Asp-450 the chain carries (Z)-2,3-didehydroaspartate. An S-methylcysteine modification is found at Cys-452.

This sequence belongs to the methyl-coenzyme M reductase alpha subunit family. As to quaternary structure, MCR is a hexamer of two alpha, two beta, and two gamma chains, forming a dimer of heterotrimers. Coenzyme F430 serves as cofactor. Post-translationally, the alpha subunit contains six modified amino acids near the active site region. Is methylated on His-257, Arg-271, Gln-400 and Cys-452, probably by the action of specific S-adenosylmethionine-dependent methyltransferases. Also contains a thioglycine at position 445, forming a thiopeptide bond. Contains a didehydroaspartate residue at position 450. The methylation on C5 of Arg-271 is a post-translational methylation not essential in vivo, but which plays a role for the stability and structural integrity of MCR.

It localises to the cytoplasm. The catalysed reaction is coenzyme B + methyl-coenzyme M = methane + coenzyme M-coenzyme B heterodisulfide. The protein operates within one-carbon metabolism; methyl-coenzyme M reduction; methane from methyl-coenzyme M: step 1/1. Component of the methyl-coenzyme M reductase (MCR) I that catalyzes the reductive cleavage of methyl-coenzyme M (CoM-S-CH3 or 2-(methylthio)ethanesulfonate) using coenzyme B (CoB or 7-mercaptoheptanoylthreonine phosphate) as reductant which results in the production of methane and the mixed heterodisulfide of CoB and CoM (CoM-S-S-CoB). This is the final step in methanogenesis. This chain is Methyl-coenzyme M reductase subunit alpha (mcrA), found in Methanothermobacter thermautotrophicus (strain ATCC 29096 / DSM 1053 / JCM 10044 / NBRC 100330 / Delta H) (Methanobacterium thermoautotrophicum).